A 242-amino-acid chain; its full sequence is Cysteine desulfuration protein SufE (242 aa).

Cys-148 acts as the Cysteine persulfide intermediate in catalysis.

Belongs to the SufE family. In terms of assembly, monomer. Interacts with SufS; interaction enhances cysteine desulfurase activity of SufS.

The protein resides in the plastid. The protein localises to the apicoplast. The protein operates within cofactor biosynthesis; iron-sulfur cluster biosynthesis. Functionally, participates in sulfur mobilization (SUF) pathway for iron-sulfur (Fe-S) cluster biogenesis. Enhances cysteine desulfurase activity of SufS. Probably functions as a sulfur acceptor for SufS. The sequence is that of Cysteine desulfuration protein SufE from Plasmodium vivax.